Consider the following 282-residue polypeptide: NADPH-dependent 7-cyano-7-deazaguanine reductase (282 aa).

88-90 provides a ligand contact to substrate; it reads IES. Position 90–91 (90–91) interacts with NADPH; it reads SK. Residue cysteine 190 is the Thioimide intermediate of the active site. Catalysis depends on aspartate 197, which acts as the Proton donor. Substrate is bound at residue 229 to 230; sequence HE. 258–259 provides a ligand contact to NADPH; it reads RG.

It belongs to the GTP cyclohydrolase I family. QueF type 2 subfamily. In terms of assembly, homodimer.

It localises to the cytoplasm. The catalysed reaction is 7-aminomethyl-7-carbaguanine + 2 NADP(+) = 7-cyano-7-deazaguanine + 2 NADPH + 3 H(+). Its pathway is tRNA modification; tRNA-queuosine biosynthesis. In terms of biological role, catalyzes the NADPH-dependent reduction of 7-cyano-7-deazaguanine (preQ0) to 7-aminomethyl-7-deazaguanine (preQ1). This chain is NADPH-dependent 7-cyano-7-deazaguanine reductase, found in Escherichia coli (strain SMS-3-5 / SECEC).